Here is a 192-residue protein sequence, read N- to C-terminus: Ion-translocating oxidoreductase complex subunit A (192 aa).

6 helical membrane passes run 5–25 (ILLLVGTVLVNNFVLVKFLGL), 39–59 (IGMGLATTFVLTLASVCAYLV), 67–87 (LGIEYLRTMSFILVIAVVVQF), 102–122 (LLGIFLPLITTNCAVLGVALL), 134–154 (IIYGFGAAVGFSLVLILFASM), and 171–191 (SIAMITAGLMSLAFMGFTGLV).

This sequence belongs to the NqrDE/RnfAE family. In terms of assembly, the complex is composed of six subunits: RnfA, RnfB, RnfC, RnfD, RnfE and RnfG.

The protein resides in the cell inner membrane. Part of a membrane-bound complex that couples electron transfer with translocation of ions across the membrane. The protein is Ion-translocating oxidoreductase complex subunit A of Vibrio campbellii (strain ATCC BAA-1116).